Consider the following 290-residue polypeptide: UPF0761 membrane protein YihY (290 aa).

A run of 6 helical transmembrane segments spans residues 44–64 (LLSLVPLVAVVFALFAAFPMF), 104–124 (VGACGLIVTALLLMYSIDSAL), 140–160 (FAVYWMILTLGPLLAGASLAI), 183–203 (IFPLLLSWISFWLLYSIVPTI), 210–230 (AIVGAFVAALLFEAGKKGFAL), and 244–264 (VLAVIPILFVWVYWTWCIVLL).

The protein belongs to the UPF0761 family.

The protein localises to the cell inner membrane. The chain is UPF0761 membrane protein YihY from Shigella boydii serotype 4 (strain Sb227).